A 232-amino-acid chain; its full sequence is Large ribosomal subunit protein uL1 (232 aa).

It belongs to the universal ribosomal protein uL1 family. In terms of assembly, part of the 50S ribosomal subunit.

Its function is as follows. Binds directly to 23S rRNA. The L1 stalk is quite mobile in the ribosome, and is involved in E site tRNA release. In terms of biological role, protein L1 is also a translational repressor protein, it controls the translation of the L11 operon by binding to its mRNA. The polypeptide is Large ribosomal subunit protein uL1 (Hahella chejuensis (strain KCTC 2396)).